The primary structure comprises 121 residues: Inner membrane protein YhaH (121 aa).

The Periplasmic segment spans residues 1–23; the sequence is MDWYLKVLKNYVGFRGRARRKEY. A helical membrane pass occupies residues 24–44; sequence WMFILVNIIFTFVLGLLDKML. The Cytoplasmic segment spans residues 45 to 49; it reads GWQRA. A helical membrane pass occupies residues 50-70; it reads GGEGILTTIYGILVFLPWWAV. Residues 71–80 are Periplasmic-facing; it reads QFRRLHDTDR. A helical membrane pass occupies residues 81-101; sequence SAWWALLFLIPFIGWLIIIVF. The Cytoplasmic segment spans residues 102 to 121; that stretch reads NCQAGTPGENRFGPDPKLEP.

To E.coli YhaI.

The protein resides in the cell inner membrane. The protein is Inner membrane protein YhaH (yhaH) of Escherichia coli O157:H7.